A 555-amino-acid polypeptide reads, in one-letter code: Glutamine--tRNA ligase (555 aa).

The short motif at 34 to 44 (PEPNGYLHIGH) is the 'HIGH' region element. Residues 35–37 (EPN) and 41–47 (HIGHAKS) contribute to the ATP site. 2 residues coordinate L-glutamine: aspartate 67 and tyrosine 212. Residues threonine 231, 261 to 262 (RL), and 269 to 271 (MSK) contribute to the ATP site. Positions 268–272 (IMSKR) match the 'KMSKS' region motif.

It belongs to the class-I aminoacyl-tRNA synthetase family. In terms of assembly, monomer.

It localises to the cytoplasm. It carries out the reaction tRNA(Gln) + L-glutamine + ATP = L-glutaminyl-tRNA(Gln) + AMP + diphosphate. In Yersinia pseudotuberculosis serotype O:1b (strain IP 31758), this protein is Glutamine--tRNA ligase.